We begin with the raw amino-acid sequence, 70 residues long: Exodeoxyribonuclease 7 small subunit (70 aa).

It belongs to the XseB family. In terms of assembly, heterooligomer composed of large and small subunits.

Its subcellular location is the cytoplasm. It carries out the reaction Exonucleolytic cleavage in either 5'- to 3'- or 3'- to 5'-direction to yield nucleoside 5'-phosphates.. Bidirectionally degrades single-stranded DNA into large acid-insoluble oligonucleotides, which are then degraded further into small acid-soluble oligonucleotides. The sequence is that of Exodeoxyribonuclease 7 small subunit from Streptococcus pneumoniae serotype 2 (strain D39 / NCTC 7466).